A 217-amino-acid polypeptide reads, in one-letter code: Ribosomal large subunit pseudouridine synthase E (217 aa).

The segment covering 19–28 (HQVKRFSSQR) has biased composition (polar residues). Positions 19 to 38 (HQVKRFSSQRSTRRKPENQP) are disordered. The active-site Nucleophile is Asp-79.

The protein belongs to the pseudouridine synthase RsuA family.

The catalysed reaction is uridine(2457) in 23S rRNA = pseudouridine(2457) in 23S rRNA. Functionally, responsible for synthesis of pseudouridine from uracil-2457 in 23S ribosomal RNA. The protein is Ribosomal large subunit pseudouridine synthase E (rluE) of Escherichia coli O157:H7.